The primary structure comprises 203 residues: uncharacterized protein (203 aa).

The PilZ domain maps to 90 to 188; the sequence is EKRQHVRVQP…YENIIGRYVM (99 aa).

This sequence to A.aeolicus aq_820 and aq_1583.

This is an uncharacterized protein from Aquifex aeolicus (strain VF5).